Here is a 230-residue protein sequence, read N- to C-terminus: Urease accessory protein UreF (230 aa).

It belongs to the UreF family. In terms of assembly, ureD, UreF and UreG form a complex that acts as a GTP-hydrolysis-dependent molecular chaperone, activating the urease apoprotein by helping to assemble the nickel containing metallocenter of UreC. The UreE protein probably delivers the nickel.

It is found in the cytoplasm. Its function is as follows. Required for maturation of urease via the functional incorporation of the urease nickel metallocenter. The protein is Urease accessory protein UreF of Cupriavidus taiwanensis (strain DSM 17343 / BCRC 17206 / CCUG 44338 / CIP 107171 / LMG 19424 / R1) (Ralstonia taiwanensis (strain LMG 19424)).